The primary structure comprises 305 residues: Aspartate carbamoyltransferase catalytic subunit (305 aa).

Arginine 56 and threonine 57 together coordinate carbamoyl phosphate. Residue lysine 85 coordinates L-aspartate. Residues arginine 106, histidine 134, and glutamine 137 each contribute to the carbamoyl phosphate site. L-aspartate-binding residues include arginine 167 and arginine 227. Carbamoyl phosphate contacts are provided by leucine 266 and proline 267.

It belongs to the aspartate/ornithine carbamoyltransferase superfamily. ATCase family. Heterooligomer of catalytic and regulatory chains.

The catalysed reaction is carbamoyl phosphate + L-aspartate = N-carbamoyl-L-aspartate + phosphate + H(+). It participates in pyrimidine metabolism; UMP biosynthesis via de novo pathway; (S)-dihydroorotate from bicarbonate: step 2/3. Its function is as follows. Catalyzes the condensation of carbamoyl phosphate and aspartate to form carbamoyl aspartate and inorganic phosphate, the committed step in the de novo pyrimidine nucleotide biosynthesis pathway. This is Aspartate carbamoyltransferase catalytic subunit from Thermoplasma acidophilum (strain ATCC 25905 / DSM 1728 / JCM 9062 / NBRC 15155 / AMRC-C165).